We begin with the raw amino-acid sequence, 366 residues long: tRNA/tmRNA (uracil-C(5))-methyltransferase (366 aa).

Positions 190, 218, 223, 239, and 299 each coordinate S-adenosyl-L-methionine. Cys-324 acts as the Nucleophile in catalysis. The Proton acceptor role is filled by Glu-358.

This sequence belongs to the class I-like SAM-binding methyltransferase superfamily. RNA M5U methyltransferase family. TrmA subfamily.

The enzyme catalyses uridine(54) in tRNA + S-adenosyl-L-methionine = 5-methyluridine(54) in tRNA + S-adenosyl-L-homocysteine + H(+). The catalysed reaction is uridine(341) in tmRNA + S-adenosyl-L-methionine = 5-methyluridine(341) in tmRNA + S-adenosyl-L-homocysteine + H(+). Its function is as follows. Dual-specificity methyltransferase that catalyzes the formation of 5-methyluridine at position 54 (m5U54) in all tRNAs, and that of position 341 (m5U341) in tmRNA (transfer-mRNA). The sequence is that of tRNA/tmRNA (uracil-C(5))-methyltransferase from Shigella flexneri serotype 5b (strain 8401).